The chain runs to 303 residues: ATP phosphoribosyltransferase (303 aa).

This sequence belongs to the ATP phosphoribosyltransferase family. Long subfamily. It depends on Mg(2+) as a cofactor.

It localises to the cytoplasm. It carries out the reaction 1-(5-phospho-beta-D-ribosyl)-ATP + diphosphate = 5-phospho-alpha-D-ribose 1-diphosphate + ATP. The protein operates within amino-acid biosynthesis; L-histidine biosynthesis; L-histidine from 5-phospho-alpha-D-ribose 1-diphosphate: step 1/9. Its activity is regulated as follows. Feedback inhibited by histidine. Catalyzes the condensation of ATP and 5-phosphoribose 1-diphosphate to form N'-(5'-phosphoribosyl)-ATP (PR-ATP). Has a crucial role in the pathway because the rate of histidine biosynthesis seems to be controlled primarily by regulation of HisG enzymatic activity. The polypeptide is ATP phosphoribosyltransferase (Haemophilus influenzae (strain PittGG)).